A 1058-amino-acid polypeptide reads, in one-letter code: Kinesin-like protein KIN-5D (1058 aa).

The tract at residues Met1–Lys43 is disordered. The segment covering Ser22–Ser32 has biased composition (basic and acidic residues). Residues Asn48–Ile390 enclose the Kinesin motor domain. Gly134–Thr141 is an ATP binding site. Positions Gln438–Glu517 form a coiled coil.

It belongs to the TRAFAC class myosin-kinesin ATPase superfamily. Kinesin family. KIN-5/BimC subfamily.

It is found in the cytoplasm. The protein localises to the cytoskeleton. Its subcellular location is the spindle. Functionally, responsible for microtubule translocation. May be important for the organization of phragmoplast-specific arrays of microtubules. Plays an essential role in stabilizing the mitotic spindle. Required during mitotic cytokinesis. The protein is Kinesin-like protein KIN-5D of Arabidopsis thaliana (Mouse-ear cress).